A 174-amino-acid polypeptide reads, in one-letter code: ATP synthase subunit b (174 aa).

Residues 9-29 (LPNTSLIFWEVVTFLILLALL) form a helical membrane-spanning segment.

This sequence belongs to the ATPase B chain family. As to quaternary structure, F-type ATPases have 2 components, F(1) - the catalytic core - and F(0) - the membrane proton channel. F(1) has five subunits: alpha(3), beta(3), gamma(1), delta(1), epsilon(1). F(0) has three main subunits: a(1), b(2) and c(10-14). The alpha and beta chains form an alternating ring which encloses part of the gamma chain. F(1) is attached to F(0) by a central stalk formed by the gamma and epsilon chains, while a peripheral stalk is formed by the delta and b chains.

It localises to the cell membrane. Functionally, f(1)F(0) ATP synthase produces ATP from ADP in the presence of a proton or sodium gradient. F-type ATPases consist of two structural domains, F(1) containing the extramembraneous catalytic core and F(0) containing the membrane proton channel, linked together by a central stalk and a peripheral stalk. During catalysis, ATP synthesis in the catalytic domain of F(1) is coupled via a rotary mechanism of the central stalk subunits to proton translocation. Component of the F(0) channel, it forms part of the peripheral stalk, linking F(1) to F(0). This Rubrobacter xylanophilus (strain DSM 9941 / JCM 11954 / NBRC 16129 / PRD-1) protein is ATP synthase subunit b.